The following is a 424-amino-acid chain: UDP-N-acetylglucosamine 1-carboxyvinyltransferase (424 aa).

22 to 23 (KN) is a phosphoenolpyruvate binding site. Arginine 93 is a binding site for UDP-N-acetyl-alpha-D-glucosamine. The Proton donor role is filled by cysteine 117. The residue at position 117 (cysteine 117) is a 2-(S-cysteinyl)pyruvic acid O-phosphothioketal. UDP-N-acetyl-alpha-D-glucosamine is bound by residues 122-126 (RPVDL), 162-165 (KVSV), aspartate 307, and isoleucine 329.

The protein belongs to the EPSP synthase family. MurA subfamily.

The protein localises to the cytoplasm. It catalyses the reaction phosphoenolpyruvate + UDP-N-acetyl-alpha-D-glucosamine = UDP-N-acetyl-3-O-(1-carboxyvinyl)-alpha-D-glucosamine + phosphate. It functions in the pathway cell wall biogenesis; peptidoglycan biosynthesis. Cell wall formation. Adds enolpyruvyl to UDP-N-acetylglucosamine. The polypeptide is UDP-N-acetylglucosamine 1-carboxyvinyltransferase (Haemophilus influenzae (strain PittEE)).